The following is a 74-amino-acid chain: Cecropin-P3 (74 aa).

Residues Met1–Ser13 form the signal peptide. Residues Arg45–Ile74 constitute a propeptide, removed in mature form.

Belongs to the cecropin family. As to expression, expressed in the body wall, intestine, uterus and ovary.

It is found in the secreted. Has antibacterial activity against several Gram-positive and Gram-negative bacteria. Is weakly active against yeasts. Acts by a nonpore mechanism. This is Cecropin-P3 (ASCEC-3) from Ascaris suum (Pig roundworm).